Reading from the N-terminus, the 70-residue chain is ATP synthase subunit c (70 aa).

Helical transmembrane passes span 3–23 and 44–64; these read ALAA…IGIA and LFFI…VIAI.

The protein belongs to the ATPase C chain family. In terms of assembly, F-type ATPases have 2 components, F(1) - the catalytic core - and F(0) - the membrane proton channel. F(1) has five subunits: alpha(3), beta(3), gamma(1), delta(1), epsilon(1). F(0) has three main subunits: a(1), b(2) and c(10-14). The alpha and beta chains form an alternating ring which encloses part of the gamma chain. F(1) is attached to F(0) by a central stalk formed by the gamma and epsilon chains, while a peripheral stalk is formed by the delta and b chains.

It is found in the cell membrane. Its function is as follows. F(1)F(0) ATP synthase produces ATP from ADP in the presence of a proton or sodium gradient. F-type ATPases consist of two structural domains, F(1) containing the extramembraneous catalytic core and F(0) containing the membrane proton channel, linked together by a central stalk and a peripheral stalk. During catalysis, ATP synthesis in the catalytic domain of F(1) is coupled via a rotary mechanism of the central stalk subunits to proton translocation. In terms of biological role, key component of the F(0) channel; it plays a direct role in translocation across the membrane. A homomeric c-ring of between 10-14 subunits forms the central stalk rotor element with the F(1) delta and epsilon subunits. The polypeptide is ATP synthase subunit c (Caldicellulosiruptor saccharolyticus (strain ATCC 43494 / DSM 8903 / Tp8T 6331)).